A 150-amino-acid chain; its full sequence is Macrodomain Ter protein (150 aa).

It belongs to the MatP family. In terms of assembly, homodimer.

The protein resides in the cytoplasm. Functionally, required for spatial organization of the terminus region of the chromosome (Ter macrodomain) during the cell cycle. Prevents early segregation of duplicated Ter macrodomains during cell division. Binds specifically to matS, which is a 13 bp signature motif repeated within the Ter macrodomain. The sequence is that of Macrodomain Ter protein from Escherichia coli (strain SMS-3-5 / SECEC).